The chain runs to 525 residues: ATP synthase subunit alpha (525 aa).

Residue G172–T179 coordinates ATP.

This sequence belongs to the ATPase alpha/beta chains family. F-type ATPases have 2 components, CF(1) - the catalytic core - and CF(0) - the membrane proton channel. CF(1) has five subunits: alpha(3), beta(3), gamma(1), delta(1), epsilon(1). CF(0) has three main subunits: a(1), b(2) and c(9-12). The alpha and beta chains form an alternating ring which encloses part of the gamma chain. CF(1) is attached to CF(0) by a central stalk formed by the gamma and epsilon chains, while a peripheral stalk is formed by the delta and b chains.

The protein localises to the cell inner membrane. It catalyses the reaction ATP + H2O + 4 H(+)(in) = ADP + phosphate + 5 H(+)(out). Produces ATP from ADP in the presence of a proton gradient across the membrane. The alpha chain is a regulatory subunit. This is ATP synthase subunit alpha from Parabacteroides distasonis (strain ATCC 8503 / DSM 20701 / CIP 104284 / JCM 5825 / NCTC 11152).